Consider the following 383-residue polypeptide: Neuropeptide Y receptor type 1 (383 aa).

Topologically, residues 1–34 are extracellular; the sequence is MNSTSFSQLENHSVHYNLSEEKPSFFAFENDDCH. 3 N-linked (GlcNAc...) asparagine glycosylation sites follow: N2, N11, and N17. Residues 35 to 55 traverse the membrane as a helical segment; that stretch reads LPLAVIFTLALAYGAVIILGV. The Cytoplasmic portion of the chain corresponds to 56–87; that stretch reads SGNLALILIILKQKEMRNVTNILIVNLSFSDL. Residues 88-108 traverse the membrane as a helical segment; it reads LVAIMCLPFTFVYTLMDHWIF. The Extracellular portion of the chain corresponds to 109–116; sequence GEIMCKLN. C113 and C198 are oxidised to a cystine. Residues 117–137 traverse the membrane as a helical segment; the sequence is PFVQCVSITVSIFSLVLIAVE. Residues 138 to 154 lie on the Cytoplasmic side of the membrane; the sequence is RHQLIINPRGWRPNNRH. A helical membrane pass occupies residues 155–175; the sequence is AYIGIAVIWVLAVASSLPFMI. Topologically, residues 176–211 are extracellular; that stretch reads YQVLTDEPFQNVTLDAFKDKLVCFDQFPSDSHRLSY. Residues 212-232 form a helical membrane-spanning segment; that stretch reads TTLLLVLQYFGPLCFIFICYF. Residues 233-260 are Cytoplasmic-facing; sequence KIYIRLKRRNNMMDKMRDSKYRSSESKR. Residues 261-281 form a helical membrane-spanning segment; sequence INIMLLSIVVAFAVCWLPLTI. Topologically, residues 282-299 are extracellular; the sequence is FNTVFDWNHQIIATCNHN. Residues 300–320 traverse the membrane as a helical segment; it reads LLFLLCHLTAMISTCVNPIFY. The Cytoplasmic portion of the chain corresponds to 321–383; that stretch reads GFLNKNFQRD…KISCVENEKI (63 aa). C338 carries S-palmitoyl cysteine lipidation. Phosphoserine occurs at positions 368 and 376.

It belongs to the G-protein coupled receptor 1 family.

Its subcellular location is the cell membrane. In terms of biological role, receptor for neuropeptide Y and peptide YY. The sequence is that of Neuropeptide Y receptor type 1 (NPY1R) from Cavia porcellus (Guinea pig).